Consider the following 229-residue polypeptide: 2,3-bisphosphoglycerate-dependent phosphoglycerate mutase (229 aa).

Substrate contacts are provided by residues 7–14, 20–21, Arg59, 86–89, Lys97, 113–114, and 182–183; these read RHGQSEWN, TG, ERHY, RR, and GN. His8 acts as the Tele-phosphohistidine intermediate in catalysis. The Proton donor/acceptor role is filled by Glu86.

The protein belongs to the phosphoglycerate mutase family. BPG-dependent PGAM subfamily.

The enzyme catalyses (2R)-2-phosphoglycerate = (2R)-3-phosphoglycerate. It functions in the pathway carbohydrate degradation; glycolysis; pyruvate from D-glyceraldehyde 3-phosphate: step 3/5. Functionally, catalyzes the interconversion of 2-phosphoglycerate and 3-phosphoglycerate. The polypeptide is 2,3-bisphosphoglycerate-dependent phosphoglycerate mutase (Listeria monocytogenes serotype 4a (strain HCC23)).